We begin with the raw amino-acid sequence, 121 residues long: Large ribosomal subunit protein uL14 (121 aa).

Belongs to the universal ribosomal protein uL14 family. As to quaternary structure, part of the 50S ribosomal subunit. Forms a cluster with proteins L3 and L19. In the 70S ribosome, L14 and L19 interact and together make contacts with the 16S rRNA in bridges B5 and B8.

Its function is as follows. Binds to 23S rRNA. Forms part of two intersubunit bridges in the 70S ribosome. The sequence is that of Large ribosomal subunit protein uL14 from Prochlorococcus marinus (strain NATL1A).